The primary structure comprises 556 residues: Small ribosomal subunit protein bS1 (556 aa).

S1 motif domains lie at 35 to 105 (TIKE…ISQQ), 120 to 183 (NAII…ISRK), 204 to 272 (TEPV…LSIK), 289 to 359 (GYAI…VSLK), 377 to 444 (DVLE…LSAK), and 461 to 525 (DSVI…ASVH).

This sequence belongs to the bacterial ribosomal protein bS1 family.

Functionally, binds mRNA; thus facilitating recognition of the initiation point. It is needed to translate mRNA with a short Shine-Dalgarno (SD) purine-rich sequence. This is Small ribosomal subunit protein bS1 (rpsA) from Helicobacter pylori (strain ATCC 700392 / 26695) (Campylobacter pylori).